The chain runs to 622 residues: Probable E3 ubiquitin-protein ligase DTX2 (622 aa).

WWE domains are found at residues 8-97 (SLVQ…AVRR) and 98-174 (HLFP…SVRR). Residues Arg-213, Arg-215, and Arg-233 each carry the asymmetric dimethylarginine modification. At Lys-249 the chain carries N6-acetyllysine. Disordered regions lie at residues 249–324 (KPSL…VPMQ) and 355–393 (APQP…EPEP). At Arg-256 the chain carries Omega-N-methylarginine. Residues 274-285 (LGSQPLYRSSLS) are compositionally biased toward polar residues. Residues 299–322 (SGAVSASLPSGPSSSPGSVPATVP) show a composition bias toward low complexity. Ser-360 is subject to Phosphoserine. The segment covering 372–381 (GSVKRLRKMS) has biased composition (basic residues). An RING-type zinc finger spans residues 412 to 473 (CIICMEKLST…DGSLQCPSCK (62 aa)).

The protein belongs to the Deltex family. In terms of assembly, homodimer. May form a heterodimer with other members of the Deltex family. Interacts with NOTCH1.

It localises to the cytoplasm. Its subcellular location is the nucleus. It catalyses the reaction S-ubiquitinyl-[E2 ubiquitin-conjugating enzyme]-L-cysteine + [acceptor protein]-L-lysine = [E2 ubiquitin-conjugating enzyme]-L-cysteine + N(6)-ubiquitinyl-[acceptor protein]-L-lysine.. It functions in the pathway protein modification; protein ubiquitination. In terms of biological role, regulator of Notch signaling, a signaling pathway involved in cell-cell communications that regulates a broad spectrum of cell-fate determinations. Probably acts both as a positive and negative regulator of Notch, depending on the developmental and cell context. Mediates the antineural activity of Notch, possibly by inhibiting the transcriptional activation mediated by MATCH1. Functions as a ubiquitin ligase protein in vitro, suggesting that it may regulate the Notch pathway via some ubiquitin ligase activity. This Homo sapiens (Human) protein is Probable E3 ubiquitin-protein ligase DTX2 (DTX2).